The sequence spans 524 residues: Solute carrier family 40 member 1 (524 aa).

Over residues 1–18 the composition is skewed to basic and acidic residues; sequence MENETELRVVHQEEQQRE. The segment at 1 to 30 is disordered; that stretch reads MENETELRVVHQEEQQREEGEDESQPQNPP. Transmembrane regions (helical) follow at residues 70 to 92, 109 to 129, 137 to 157, 191 to 211, 218 to 238, 314 to 334, 347 to 367, 380 to 400, 409 to 429, 446 to 466, and 472 to 492; these read SLLL…GPIV, LLFQ…LLLV, LPVF…GVLS, GIDL…ISFV, ITFA…FISV, VVLP…FGTL, YIIG…TLVY, GLWS…SIWV, MLMA…LAVI, GVQN…GIIV, and FWIL…LYTI.

The protein belongs to the ferroportin (FP) (TC 2.A.100) family. SLC40A subfamily.

The protein resides in the membrane. Functionally, may be involved in iron transport and iron homeostasis. The sequence is that of Solute carrier family 40 member 1 (IREG1) from Arabidopsis thaliana (Mouse-ear cress).